We begin with the raw amino-acid sequence, 146 residues long: D-aminoacyl-tRNA deacylase (146 aa).

A Gly-cisPro motif, important for rejection of L-amino acids motif is present at residues 137–138 (GP).

The protein belongs to the DTD family. Homodimer.

It localises to the cytoplasm. The catalysed reaction is glycyl-tRNA(Ala) + H2O = tRNA(Ala) + glycine + H(+). The enzyme catalyses a D-aminoacyl-tRNA + H2O = a tRNA + a D-alpha-amino acid + H(+). Functionally, an aminoacyl-tRNA editing enzyme that deacylates mischarged D-aminoacyl-tRNAs. Also deacylates mischarged glycyl-tRNA(Ala), protecting cells against glycine mischarging by AlaRS. Acts via tRNA-based rather than protein-based catalysis; rejects L-amino acids rather than detecting D-amino acids in the active site. By recycling D-aminoacyl-tRNA to D-amino acids and free tRNA molecules, this enzyme counteracts the toxicity associated with the formation of D-aminoacyl-tRNA entities in vivo and helps enforce protein L-homochirality. This chain is D-aminoacyl-tRNA deacylase, found in Bacillus cereus (strain Q1).